A 485-amino-acid chain; its full sequence is NADH-quinone oxidoreductase subunit N (485 aa).

Helical transmembrane passes span 10–30 (ILPEILLALGVIVVMFSGLFL), 40–60 (IFFQVFTLLALIATFAKEYLI), 71–91 (VVFSGFAYTLQLVILVLAVFV), 107–127 (GDFYTLLMLCVLGAMVLTAAH), 129–149 (LVTIYVGLELLSLPMYALIAI), 164–184 (FVLGAIASALLLFGMSFVYGM), 209–229 (FLLVYLVMMIATFLFKLGAFP), 248–268 (IVATIPKVAAFAMLVNILFVG), 276–296 (WIYLFRIIGILSIFFGSLVAL), 304–324 (LLGYSTVSQIGFVLLATTLNP), 336–356 (VIVYLFTTLAVFGVLTTISVG), 377–397 (AFILLIVLFSMAGIPPFGGFI), 410–430 (GNYFLACFVLFMAVIASFYYV), and 454–474 (LIALSINGLVLLFLGIMPMLL).

Belongs to the complex I subunit 2 family. NDH-1 is composed of 14 different subunits. Subunits NuoA, H, J, K, L, M, N constitute the membrane sector of the complex.

It is found in the cell inner membrane. It catalyses the reaction a quinone + NADH + 5 H(+)(in) = a quinol + NAD(+) + 4 H(+)(out). Its function is as follows. NDH-1 shuttles electrons from NADH, via FMN and iron-sulfur (Fe-S) centers, to quinones in the respiratory chain. The immediate electron acceptor for the enzyme in this species is believed to be ubiquinone. Couples the redox reaction to proton translocation (for every two electrons transferred, four hydrogen ions are translocated across the cytoplasmic membrane), and thus conserves the redox energy in a proton gradient. This is NADH-quinone oxidoreductase subunit N from Francisella tularensis subsp. holarctica (strain FTNF002-00 / FTA).